Consider the following 702-residue polypeptide: Archaeal Lon protease (702 aa).

Residues Met1 to Asp63 are disordered. The Cytoplasmic segment spans residues Met1–Ser183. Over residues Pro10–Glu48 the composition is skewed to acidic residues. Gly117–Ser124 provides a ligand contact to ATP. Residues Phe184 to Ala201 traverse the membrane as a helical segment. Residues Thr202–Pro206 are Extracellular-facing. Residues Leu207–Thr223 form a helical membrane-spanning segment. The Cytoplasmic portion of the chain corresponds to Asn224–Gln702. The 181-residue stretch at Glu487 to Gly667 folds into the Lon proteolytic domain. Residues Ser574 and Lys617 contribute to the active site.

Belongs to the peptidase S16 family. Archaeal LonB subfamily. As to quaternary structure, homohexamer. Organized in a ring with a central cavity.

The protein localises to the cell membrane. Functionally, ATP-dependent serine protease that mediates the selective degradation of mutant and abnormal proteins as well as certain short-lived regulatory proteins. Degrades polypeptides processively. This Halobacterium salinarum (strain ATCC 700922 / JCM 11081 / NRC-1) (Halobacterium halobium) protein is Archaeal Lon protease.